Here is a 1051-residue protein sequence, read N- to C-terminus: Putative helicase/primase complex protein (1051 aa).

This sequence belongs to the asfivirus F1055L family.

In terms of biological role, may be involved in DNA replication. The chain is Putative helicase/primase complex protein from Ornithodoros (relapsing fever ticks).